A 148-amino-acid polypeptide reads, in one-letter code: SsrA-binding protein (148 aa).

Belongs to the SmpB family.

It is found in the cytoplasm. In terms of biological role, required for rescue of stalled ribosomes mediated by trans-translation. Binds to transfer-messenger RNA (tmRNA), required for stable association of tmRNA with ribosomes. tmRNA and SmpB together mimic tRNA shape, replacing the anticodon stem-loop with SmpB. tmRNA is encoded by the ssrA gene; the 2 termini fold to resemble tRNA(Ala) and it encodes a 'tag peptide', a short internal open reading frame. During trans-translation Ala-aminoacylated tmRNA acts like a tRNA, entering the A-site of stalled ribosomes, displacing the stalled mRNA. The ribosome then switches to translate the ORF on the tmRNA; the nascent peptide is terminated with the 'tag peptide' encoded by the tmRNA and targeted for degradation. The ribosome is freed to recommence translation, which seems to be the essential function of trans-translation. This chain is SsrA-binding protein, found in Ehrlichia canis (strain Jake).